A 311-amino-acid polypeptide reads, in one-letter code: Mitochondrial arginine transporter BAC1 (311 aa).

Solcar repeat units lie at residues 12–101, 111–203, and 219–305; these read FGFY…AKLF, PRPE…LRYH, and VDMG…SMKM. 6 helical membrane-spanning segments follow: residues 18-38, 76-96, 113-133, 178-197, 222-242, and 288-308; these read YVAG…FDTV, GATS…GIYS, PEII…VLCP, GGSA…FTVY, GIGV…VLPF, and AFPA…MLGI.

Belongs to the mitochondrial carrier (TC 2.A.29) family. High expression in flowers and siliques. Lower expression in leaves and stems.

The protein resides in the mitochondrion inner membrane. With respect to regulation, inhibited by mercuric chloride. Mitochondrial arginine transporter that catalyzes the counter-exchange of arginine with lysine, ornithine, arginine and histidine. Substrate preference in reconstituted proteoliposomes is arginine &gt; lysine &gt; ornithine &gt; histidine. May be involved in the delivery of arginine, released from seed reserves, to mitochondrial arginase and the export of ornithine. This chain is Mitochondrial arginine transporter BAC1 (BAC1), found in Arabidopsis thaliana (Mouse-ear cress).